We begin with the raw amino-acid sequence, 149 residues long: Nucleoside diphosphate kinase (149 aa).

ATP contacts are provided by K9, F57, R85, T91, R102, and N112. The active-site Pros-phosphohistidine intermediate is H115.

It belongs to the NDK family. The cofactor is Mg(2+).

It is found in the cytoplasm. The enzyme catalyses a 2'-deoxyribonucleoside 5'-diphosphate + ATP = a 2'-deoxyribonucleoside 5'-triphosphate + ADP. The catalysed reaction is a ribonucleoside 5'-diphosphate + ATP = a ribonucleoside 5'-triphosphate + ADP. Major role in the synthesis of nucleoside triphosphates other than ATP. The ATP gamma phosphate is transferred to the NDP beta phosphate via a ping-pong mechanism, using a phosphorylated active-site intermediate. The sequence is that of Nucleoside diphosphate kinase from Methanospirillum hungatei JF-1 (strain ATCC 27890 / DSM 864 / NBRC 100397 / JF-1).